The sequence spans 132 residues: Fatty acid-binding protein type 2 (132 aa).

Ala2 carries the post-translational modification N-acetylalanine.

It belongs to the calycin superfamily. Fatty-acid binding protein (FABP) family.

The sequence is that of Fatty acid-binding protein type 2 from Fasciola hepatica (Liver fluke).